The sequence spans 186 residues: HGPRTase-like protein 3 (186 aa).

This sequence belongs to the purine/pyrimidine phosphoribosyltransferase family. Archaeal HPRT subfamily.

In terms of biological role, may catalyze a purine salvage reaction, the substrate is unknown. The protein is HGPRTase-like protein 3 of Haloterrigena turkmenica (strain ATCC 51198 / DSM 5511 / JCM 9101 / NCIMB 13204 / VKM B-1734 / 4k) (Halococcus turkmenicus).